The primary structure comprises 128 residues: Large ribosomal subunit protein eL31 (128 aa).

The protein belongs to the eukaryotic ribosomal protein eL31 family.

The protein is Large ribosomal subunit protein eL31 (RpL31) of Drosophila virilis (Fruit fly).